The primary structure comprises 219 residues: uncharacterized protein (219 aa).

A signal peptide spans 1-17; it reads MFKKIIILFLGIFLLSS. C18 is lipidated: N-palmitoyl cysteine. A lipid anchor (S-diacylglycerol cysteine) is attached at C18. A disordered region spans residues 110–136; the sequence is KAESNATQSNNDMTLSKANKKVRKDDS. The segment covering 112-126 has biased composition (polar residues); sequence ESNATQSNNDMTLSK. Positions 137-165 form a coiled coil; the sequence is YKEKKIEEELNQIKAMLRETKRDITKYTC.

Its subcellular location is the cell membrane. This is an uncharacterized protein from Rickettsia prowazekii (strain Madrid E).